Reading from the N-terminus, the 90-residue chain is U7-theraphotoxin-Hhn1a 7 (90 aa).

A signal peptide spans 1 to 19 (MKTAIFTVVLALAVFAVLS). A propeptide spanning residues 20 to 50 (FGWEANEKALSEGFTELIHEKEAASETEARE) is cleaved from the precursor. 3 cysteine pairs are disulfide-bonded: C51/C65, C58/C70, and C64/C81.

This sequence belongs to the neurotoxin 10 (Hwtx-1) family. 13 (Hntx-13) subfamily. As to expression, expressed by the venom gland.

The protein localises to the secreted. Ion channel inhibitor. This Cyriopagopus hainanus (Chinese bird spider) protein is U7-theraphotoxin-Hhn1a 7.